The following is a 310-amino-acid chain: MKQLSIVILLLSIVYTTKPHPTQISKKLGDDATLSCNRNNTHGYLVMSSWYKKPDSIILLAAKNDVVYFDDYTADKVSYDSPYDTLATIITIKSLTSADAGTYICAFFITSTNDTDKIDYEEYFIDLVVNPANVSTIDAILSGSTTQQDIISHTEEQHDSDTTICTSESTTQISETSESTTSSQISETSESTSYGVEDDTQYNVTTDTTDNSDTIGTLPEEDTTTISTTIHKTTTTDDNLYDTYNEPISVSSSIPTTVESVTISTTKYTTSDFIEIFGIVSLILLLAVAIFCIIYYFCSGRSRKQETNIL.

The first 16 residues, 1–16 (MKQLSIVILLLSIVYT), serve as a signal peptide directing secretion. The Virion surface segment spans residues 17–275 (TKPHPTQISK…TKYTTSDFIE (259 aa)). One can recognise an Ig-like V-type domain in the interval 19–121 (PHPTQISKKL…TNDTDKIDYE (103 aa)). Cysteines 36 and 105 form a disulfide. Residues Asn-39, Asn-113, and Asn-133 are each glycosylated (N-linked (GlcNAc...) asparagine; by host). The segment at 153 to 195 (HTEEQHDSDTTICTSESTTQISETSESTTSSQISETSESTSYG) is disordered. Over residues 162–193 (TTICTSESTTQISETSESTTSSQISETSESTS) the composition is skewed to low complexity. Asn-203 is a glycosylation site (N-linked (GlcNAc...) asparagine; by host). The helical transmembrane segment at 276–300 (IFGIVSLILLLAVAIFCIIYYFCSG) threads the bilayer. At 301 to 310 (RSRKQETNIL) the chain is on the intravirion side.

As to quaternary structure, heterodimerizes with K2. The heterodimer A56/K2 interacts with components of the entry fusion complex A16 and G9. Interacts with K2 protein. Heterodimer with C3/VPC protein; disulfide-linked. In terms of processing, glycosylated; contains phosphate and sulfate-substituted glycans. O-glycosylation is required for hemagglutination and hemadsorption activities of infected cell membranes.

It localises to the virion membrane. The protein localises to the host membrane. In terms of biological role, prevents cell to cell fusion by interacting with and directing the viral K2 protein on the host plasma membrane. The A56-K2 complex associates with components of the entry fusion complex (EFC) presumably to avoid superinfection and syncytium formation. Via its interaction with C3/VCP protein, protects the infected cell and probably also the extracellular enveloped virus from complement attack. This is Protein A56 (HA) from Raccoon poxvirus (RCN).